A 381-amino-acid chain; its full sequence is Cobalt-precorrin-5B C(1)-methyltransferase (381 aa).

It belongs to the CbiD family.

The catalysed reaction is Co-precorrin-5B + S-adenosyl-L-methionine = Co-precorrin-6A + S-adenosyl-L-homocysteine. Its pathway is cofactor biosynthesis; adenosylcobalamin biosynthesis; cob(II)yrinate a,c-diamide from sirohydrochlorin (anaerobic route): step 6/10. Its function is as follows. Catalyzes the methylation of C-1 in cobalt-precorrin-5B to form cobalt-precorrin-6A. This chain is Cobalt-precorrin-5B C(1)-methyltransferase, found in Prochlorococcus marinus (strain NATL2A).